Here is a 358-residue protein sequence, read N- to C-terminus: Carbamoyl phosphate synthase small chain (358 aa).

The segment at 1-168 (MKRLLLLEDG…TKLAYASPGV (168 aa)) is CPSase. Ser-45, Gly-219, and Gly-221 together coordinate L-glutamine. Residues 171-357 (NIVLVDFGLK…INMIDDFQQK (187 aa)) enclose the Glutamine amidotransferase type-1 domain. Cys-246 (nucleophile) is an active-site residue. L-glutamine contacts are provided by Met-247, Gln-250, Asn-288, Gly-290, and Tyr-291. Active-site residues include His-330 and Asp-332.

The protein belongs to the CarA family. Composed of two chains; the small (or glutamine) chain promotes the hydrolysis of glutamine to ammonia, which is used by the large (or ammonia) chain to synthesize carbamoyl phosphate. Tetramer of heterodimers (alpha,beta)4.

The enzyme catalyses hydrogencarbonate + L-glutamine + 2 ATP + H2O = carbamoyl phosphate + L-glutamate + 2 ADP + phosphate + 2 H(+). The catalysed reaction is L-glutamine + H2O = L-glutamate + NH4(+). It participates in amino-acid biosynthesis; L-arginine biosynthesis; carbamoyl phosphate from bicarbonate: step 1/1. It functions in the pathway pyrimidine metabolism; UMP biosynthesis via de novo pathway; (S)-dihydroorotate from bicarbonate: step 1/3. Its function is as follows. Small subunit of the glutamine-dependent carbamoyl phosphate synthetase (CPSase). CPSase catalyzes the formation of carbamoyl phosphate from the ammonia moiety of glutamine, carbonate, and phosphate donated by ATP, constituting the first step of 2 biosynthetic pathways, one leading to arginine and/or urea and the other to pyrimidine nucleotides. The small subunit (glutamine amidotransferase) binds and cleaves glutamine to supply the large subunit with the substrate ammonia. In Streptococcus agalactiae serotype III (strain NEM316), this protein is Carbamoyl phosphate synthase small chain.